Consider the following 393-residue polypeptide: Staphopain B (393 aa).

An N-terminal signal peptide occupies residues 1-36 (MNSSYKSRVFNIISIIMVSMLILSLGAFANNNKAKA). The propeptide occupies 37–219 (DSHSKQLEIN…KVEENEAIQE (183 aa)). Residues Cys-243, His-340, and Asn-360 contribute to the active site.

It belongs to the peptidase C47 family. In the cytoplasm, prematurely activated/folded SspB forms a stable non-covalent complex with SspC. Post-translationally, proteolytically cleaved by staphylococcal serine protease (SspA).

The protein localises to the secreted. With respect to regulation, prematurely activated/folded staphopain B is inhibited by staphostatin B (SspC), which is probably required to protect staphylococcal cytoplasmic proteins from degradation by SspB. In terms of biological role, cysteine protease that plays an important role in the inhibition of host innate immune response. Degrades host elastin, fibrogen, fibronectin and kininogen. Blocks phagocytosis of opsonised S.aureus by neutrophils and monocytes by inducing their death in a proteolytic activity-dependent manner. Decreases surface expression of the 'don't eat me' signal CD31 on neutrophils. Cleaves host galectin-3/LGALS3, thereby inhibiting the neutrophil-activating ability of the lectin. This chain is Staphopain B (sspB), found in Staphylococcus aureus (strain MSSA476).